Here is a 318-residue protein sequence, read N- to C-terminus: MDFKDYYKILGVEPTADDKAIKAAYRKLARKYHPDVSKERDAEDKFKEANEAYEVLGDAQKRAEFDEIRKYGGQHGRPFQAPPGWENRGGGGGFEGGDFSDFFSSIFGGRGGGNPFGGARQQQRSAGRRGQDVELELAVFLEETLSKESKQISFQVPQTNAMGQRTGFTTKTLNVKIPAGVTDGERIRLKGQGAPGSGGGANGDLFLTLRMAPHPLFDVEGHDLIITVPLAPWEAALGAKVAVPTLEGKINLTIRPDSQSGQRLRVPGKGLANKQGERGNLYAQLKVVMPTTSDESTRELWAKLSEKAAFNPRAQWSK.

Residues 5–69 form the J domain; sequence DYYKILGVEP…QKRAEFDEIR (65 aa). Positions 111–130 are disordered; the sequence is GGGNPFGGARQQQRSAGRRG.

Its subcellular location is the cytoplasm. The protein localises to the nucleoid. DNA-binding protein that preferentially recognizes a curved DNA sequence. It is probably a functional analog of DnaJ; displays overlapping activities with DnaJ, but functions under different conditions, probably acting as a molecular chaperone in an adaptive response to environmental stresses other than heat shock. Lacks autonomous chaperone activity; binds native substrates and targets them for recognition by DnaK. Its activity is inhibited by the binding of CbpM. The sequence is that of Curved DNA-binding protein from Pseudomonas putida (strain GB-1).